The sequence spans 449 residues: N-succinylarginine dihydrolase (449 aa).

Substrate-binding positions include 19–28, Asn110, and 137–138; these read GGLSYGNVAS and HR. Positions 23-43 are disordered; that stretch reads YGNVASQSNSQQASNPREAAR. The segment covering 27–37 has biased composition (low complexity); the sequence is ASQSNSQQASN. Glu174 is an active-site residue. Substrate is bound at residue Arg214. The active site involves His250. Residues Asp252 and Asn365 each contribute to the substrate site. The active-site Nucleophile is the Cys371.

This sequence belongs to the succinylarginine dihydrolase family. In terms of assembly, homodimer.

It carries out the reaction N(2)-succinyl-L-arginine + 2 H2O + 2 H(+) = N(2)-succinyl-L-ornithine + 2 NH4(+) + CO2. Its pathway is amino-acid degradation; L-arginine degradation via AST pathway; L-glutamate and succinate from L-arginine: step 2/5. In terms of biological role, catalyzes the hydrolysis of N(2)-succinylarginine into N(2)-succinylornithine, ammonia and CO(2). This Pseudomonas putida (strain ATCC 700007 / DSM 6899 / JCM 31910 / BCRC 17059 / LMG 24140 / F1) protein is N-succinylarginine dihydrolase.